The sequence spans 284 residues: Bifunctional protein FolD (284 aa).

NADP(+) contacts are provided by residues 165-167, Ser-190, and Ile-231; that span reads GRS.

Belongs to the tetrahydrofolate dehydrogenase/cyclohydrolase family. As to quaternary structure, homodimer.

It catalyses the reaction (6R)-5,10-methylene-5,6,7,8-tetrahydrofolate + NADP(+) = (6R)-5,10-methenyltetrahydrofolate + NADPH. It carries out the reaction (6R)-5,10-methenyltetrahydrofolate + H2O = (6R)-10-formyltetrahydrofolate + H(+). Its pathway is one-carbon metabolism; tetrahydrofolate interconversion. In terms of biological role, catalyzes the oxidation of 5,10-methylenetetrahydrofolate to 5,10-methenyltetrahydrofolate and then the hydrolysis of 5,10-methenyltetrahydrofolate to 10-formyltetrahydrofolate. The protein is Bifunctional protein FolD of Streptococcus thermophilus (strain ATCC BAA-250 / LMG 18311).